A 406-amino-acid polypeptide reads, in one-letter code: Succinylornithine transaminase/acetylornithine aminotransferase (406 aa).

Pyridoxal 5'-phosphate-binding positions include 108-109 (GA) and Phe141. Arg144 provides a ligand contact to N(2)-acetyl-L-ornithine. 226–229 (DEVQ) provides a ligand contact to pyridoxal 5'-phosphate. At Lys255 the chain carries N6-(pyridoxal phosphate)lysine. Position 283 (Thr283) interacts with N(2)-acetyl-L-ornithine. Thr284 serves as a coordination point for pyridoxal 5'-phosphate.

It belongs to the class-III pyridoxal-phosphate-dependent aminotransferase family. ArgD subfamily. As to quaternary structure, homodimer. Pyridoxal 5'-phosphate serves as cofactor.

It is found in the cytoplasm. The catalysed reaction is N(2)-succinyl-L-ornithine + 2-oxoglutarate = N-succinyl-L-glutamate 5-semialdehyde + L-glutamate. The enzyme catalyses N(2)-acetyl-L-ornithine + 2-oxoglutarate = N-acetyl-L-glutamate 5-semialdehyde + L-glutamate. The protein operates within amino-acid biosynthesis; L-arginine biosynthesis; N(2)-acetyl-L-ornithine from L-glutamate: step 4/4. Its pathway is amino-acid degradation; L-arginine degradation via AST pathway; L-glutamate and succinate from L-arginine: step 3/5. Functionally, transaminates both N(2)-acetylornithine and N(2)-succinylornithine. The polypeptide is Succinylornithine transaminase/acetylornithine aminotransferase (aruC) (Pseudomonas aeruginosa (strain ATCC 15692 / DSM 22644 / CIP 104116 / JCM 14847 / LMG 12228 / 1C / PRS 101 / PAO1)).